Here is a 251-residue protein sequence, read N- to C-terminus: UPF0246 protein TM1040_2658 (251 aa).

The protein belongs to the UPF0246 family.

In Ruegeria sp. (strain TM1040) (Silicibacter sp.), this protein is UPF0246 protein TM1040_2658.